A 185-amino-acid polypeptide reads, in one-letter code: Hypoxanthine/guanine phosphoribosyltransferase (185 aa).

It belongs to the purine/pyrimidine phosphoribosyltransferase family. Archaeal HPRT subfamily. Homodimer.

The protein resides in the cytoplasm. The catalysed reaction is IMP + diphosphate = hypoxanthine + 5-phospho-alpha-D-ribose 1-diphosphate. The enzyme catalyses GMP + diphosphate = guanine + 5-phospho-alpha-D-ribose 1-diphosphate. It participates in purine metabolism; IMP biosynthesis via salvage pathway; IMP from hypoxanthine: step 1/1. Its function is as follows. Catalyzes a salvage reaction resulting in the formation of IMP that is energically less costly than de novo synthesis. The protein is Hypoxanthine/guanine phosphoribosyltransferase (hpt) of Methanococcus maripaludis (strain DSM 14266 / JCM 13030 / NBRC 101832 / S2 / LL).